The sequence spans 476 residues: Sulfate adenylyltransferase subunit 1 (476 aa).

Positions 24–243 constitute a tr-type G domain; that stretch reads KSLLRFLTCG…VDVEKEKEAG (220 aa). Positions 33-40 are G1; that stretch reads GSVDDGKS. Residue 33 to 40 coordinates GTP; the sequence is GSVDDGKS. Positions 91–95 are G2; that stretch reads GITID. The G3 stretch occupies residues 112–115; it reads DTPG. GTP-binding positions include 112 to 116 and 167 to 170; these read DTPGH and NKMD. The tract at residues 167–170 is G4; it reads NKMD. Residues 205 to 207 are G5; it reads SAL.

This sequence belongs to the TRAFAC class translation factor GTPase superfamily. Classic translation factor GTPase family. CysN/NodQ subfamily. As to quaternary structure, heterodimer composed of CysD, the smaller subunit, and CysN.

It carries out the reaction sulfate + ATP + H(+) = adenosine 5'-phosphosulfate + diphosphate. It participates in sulfur metabolism; hydrogen sulfide biosynthesis; sulfite from sulfate: step 1/3. Functionally, with CysD forms the ATP sulfurylase (ATPS) that catalyzes the adenylation of sulfate producing adenosine 5'-phosphosulfate (APS) and diphosphate, the first enzymatic step in sulfur assimilation pathway. APS synthesis involves the formation of a high-energy phosphoric-sulfuric acid anhydride bond driven by GTP hydrolysis by CysN coupled to ATP hydrolysis by CysD. This chain is Sulfate adenylyltransferase subunit 1, found in Vibrio vulnificus (strain YJ016).